A 121-amino-acid polypeptide reads, in one-letter code: Large ribosomal subunit protein uL14 (121 aa).

Belongs to the universal ribosomal protein uL14 family. Part of the 50S ribosomal subunit. Forms a cluster with proteins L3 and L19. In the 70S ribosome, L14 and L19 interact and together make contacts with the 16S rRNA in bridges B5 and B8.

In terms of biological role, binds to 23S rRNA. Forms part of two intersubunit bridges in the 70S ribosome. This is Large ribosomal subunit protein uL14 from Prochlorococcus marinus (strain MIT 9211).